We begin with the raw amino-acid sequence, 509 residues long: Lanosterol 14-alpha demethylase (509 aa).

Residues 30-50 (GNLLSMLLIACAFTLSLVYLI) form a helical membrane-spanning segment. A heme-binding site is contributed by C455.

It belongs to the cytochrome P450 family. The cofactor is heme. Post-translationally, ubiquitinated by MARCHF6, leading to proteasomal degradation. As to expression, ubiquitously expressed with highest levels in testis, ovary, adrenal, prostate, liver, kidney and lung.

The protein localises to the endoplasmic reticulum membrane. Its subcellular location is the microsome membrane. It carries out the reaction a 14alpha-methyl steroid + 3 reduced [NADPH--hemoprotein reductase] + 3 O2 = a Delta(14) steroid + formate + 3 oxidized [NADPH--hemoprotein reductase] + 4 H2O + 4 H(+). The enzyme catalyses lanosterol + 3 reduced [NADPH--hemoprotein reductase] + 3 O2 = 4,4-dimethyl-5alpha-cholesta-8,14,24-trien-3beta-ol + formate + 3 oxidized [NADPH--hemoprotein reductase] + 4 H2O + 4 H(+). The catalysed reaction is 24,25-dihydrolanosterol + 3 reduced [NADPH--hemoprotein reductase] + 3 O2 = 4,4-dimethyl-8,14-cholestadien-3beta-ol + formate + 3 oxidized [NADPH--hemoprotein reductase] + 4 H2O + 4 H(+). It catalyses the reaction a 14alpha-methyl steroid + reduced [NADPH--hemoprotein reductase] + O2 = a 14alpha-hydroxymethyl steroid + oxidized [NADPH--hemoprotein reductase] + H2O + H(+). It carries out the reaction a 14alpha-hydroxymethyl steroid + reduced [NADPH--hemoprotein reductase] + O2 = a 14alpha-formyl steroid + oxidized [NADPH--hemoprotein reductase] + 2 H2O + H(+). The enzyme catalyses a 14alpha-formyl steroid + reduced [NADPH--hemoprotein reductase] + O2 = a Delta(14) steroid + formate + oxidized [NADPH--hemoprotein reductase] + H2O + 2 H(+). The catalysed reaction is lanosterol + reduced [NADPH--hemoprotein reductase] + O2 = 32-hydroxylanosterol + oxidized [NADPH--hemoprotein reductase] + H2O + H(+). It catalyses the reaction 32-hydroxylanosterol + reduced [NADPH--hemoprotein reductase] + O2 = 32-oxolanosterol + oxidized [NADPH--hemoprotein reductase] + 2 H2O + H(+). It carries out the reaction 32-oxolanosterol + reduced [NADPH--hemoprotein reductase] + O2 = 4,4-dimethyl-5alpha-cholesta-8,14,24-trien-3beta-ol + formate + oxidized [NADPH--hemoprotein reductase] + H2O + 2 H(+). The enzyme catalyses 24,25-dihydrolanosterol + reduced [NADPH--hemoprotein reductase] + O2 = 32-hydroxy-24,25-dihydrolanosterol + oxidized [NADPH--hemoprotein reductase] + H2O + H(+). The catalysed reaction is 32-hydroxy-24,25-dihydrolanosterol + reduced [NADPH--hemoprotein reductase] + O2 = 32-oxo-24,25-dihydrolanosterol + oxidized [NADPH--hemoprotein reductase] + 2 H2O + H(+). It catalyses the reaction 32-oxo-24,25-dihydrolanosterol + reduced [NADPH--hemoprotein reductase] + O2 = 4,4-dimethyl-8,14-cholestadien-3beta-ol + formate + oxidized [NADPH--hemoprotein reductase] + H2O + 2 H(+). It functions in the pathway steroid biosynthesis; zymosterol biosynthesis; zymosterol from lanosterol: step 1/6. Inhibited by azalanstat. Inhibited by azole antifungal agents ketoconazole, itraconazole and fluconazole. Functionally, sterol 14alpha-demethylase that plays a critical role in the cholesterol biosynthesis pathway, being cholesterol the major sterol component in mammalian membranes as well as a precursor for bile acid and steroid hormone synthesis. Cytochrome P450 monooxygenase that catalyzes the three-step oxidative removal of the 14alpha-methyl group (C-32) of sterols such as lanosterol (lanosta-8,24-dien-3beta-ol) and 24,25-dihydrolanosterol (DHL) in the form of formate, and converts the sterols to 4,4-dimethyl-5alpha-cholesta-8,14,24-trien-3beta-ol and 4,4-dimethyl-8,14-cholestadien-3beta-ol, respectively, which are intermediates of cholesterol biosynthesis. Can also demethylate substrates not intrinsic to mammals, such as eburicol (24-methylene-24,25-dihydrolanosterol), but at a lower rate than DHL. The chain is Lanosterol 14-alpha demethylase from Homo sapiens (Human).